The chain runs to 58 residues: Probable mRNA interferase HicA 2 (58 aa).

The protein belongs to the HicA mRNA interferase family. In terms of assembly, probably forms a complex with the cognate antitoxin HicB 2 which inhibits the mRNA interferase activity.

Its function is as follows. Toxic component of a type II toxin-antitoxin (TA) system. A probable translation-independent mRNA interferase. This Photorhabdus laumondii subsp. laumondii (strain DSM 15139 / CIP 105565 / TT01) (Photorhabdus luminescens subsp. laumondii) protein is Probable mRNA interferase HicA 2 (hicA2).